The sequence spans 287 residues: Bifunctional protein FolD (287 aa).

NADP(+) contacts are provided by residues 166 to 168 (GAS) and Ile-232.

Belongs to the tetrahydrofolate dehydrogenase/cyclohydrolase family. As to quaternary structure, homodimer.

The enzyme catalyses (6R)-5,10-methylene-5,6,7,8-tetrahydrofolate + NADP(+) = (6R)-5,10-methenyltetrahydrofolate + NADPH. The catalysed reaction is (6R)-5,10-methenyltetrahydrofolate + H2O = (6R)-10-formyltetrahydrofolate + H(+). Its pathway is one-carbon metabolism; tetrahydrofolate interconversion. In terms of biological role, catalyzes the oxidation of 5,10-methylenetetrahydrofolate to 5,10-methenyltetrahydrofolate and then the hydrolysis of 5,10-methenyltetrahydrofolate to 10-formyltetrahydrofolate. In Pectobacterium carotovorum subsp. carotovorum (strain PC1), this protein is Bifunctional protein FolD.